The chain runs to 212 residues: 2-phospho-L-lactate guanylyltransferase (212 aa).

Belongs to the CofC family. Homodimer.

It carries out the reaction (2S)-2-phospholactate + GTP + H(+) = (2S)-lactyl-2-diphospho-5'-guanosine + diphosphate. Its pathway is cofactor biosynthesis; coenzyme F420 biosynthesis. In terms of biological role, guanylyltransferase that catalyzes the activation of (2S)-2-phospholactate (2-PL) as (2S)-lactyl-2-diphospho-5'-guanosine, via the condensation of 2-PL with GTP. It is involved in the biosynthesis of coenzyme F420, a hydride carrier cofactor. This Methanocorpusculum labreanum (strain ATCC 43576 / DSM 4855 / Z) protein is 2-phospho-L-lactate guanylyltransferase.